Consider the following 225-residue polypeptide: Ribonuclease T (225 aa).

The segment at 1–21 (MSEDHFDDEHEGHGGGGGSRH) is disordered. Residues 33-207 (VVVDVETGGF…YDTEKTAELF (175 aa)) enclose the Exonuclease domain. Residues Asp-36, Glu-38, His-194, and Asp-199 each coordinate Mg(2+). His-194 functions as the Proton donor/acceptor in the catalytic mechanism.

The protein belongs to the RNase T family. In terms of assembly, homodimer. Mg(2+) is required as a cofactor.

Trims short 3' overhangs of a variety of RNA species, leaving a one or two nucleotide 3' overhang. Responsible for the end-turnover of tRNA: specifically removes the terminal AMP residue from uncharged tRNA (tRNA-C-C-A). Also appears to be involved in tRNA biosynthesis. The polypeptide is Ribonuclease T (Pseudomonas savastanoi pv. phaseolicola (strain 1448A / Race 6) (Pseudomonas syringae pv. phaseolicola (strain 1448A / Race 6))).